The sequence spans 185 residues: Ribosome-recycling factor (185 aa).

Belongs to the RRF family.

The protein resides in the cytoplasm. Functionally, responsible for the release of ribosomes from messenger RNA at the termination of protein biosynthesis. May increase the efficiency of translation by recycling ribosomes from one round of translation to another. This is Ribosome-recycling factor from Actinobacillus pleuropneumoniae serotype 5b (strain L20).